A 1167-amino-acid chain; its full sequence is White collar 1 protein (1167 aa).

Disordered regions lie at residues 1–91 (MNNN…MSGG) and 307–355 (STPA…GASQ). The span at 21–57 (QHQQQQQQQQQQQQQQQQQQQQQQQQQQQQHQHQQQQ) shows a compositional bias: low complexity. Polar residues-rich tracts occupy residues 70 to 91 (TPPTTNQGNSTIHASDVTMSGG) and 307 to 325 (STPATTFQSPSLSATTQTI). Residues 335–348 (VTNAPTPAPFTSTP) are compositionally biased toward low complexity. The PAS 1 domain maps to 381–452 (KLKLGAVDMS…KREFVENNAV (72 aa)). Cysteine 428 carries the S-4a-FMN cysteine modification. The region spanning 469 to 508 (LINYRKGGKPFLNLLTMIPIPWDTEEIRYFIGFQIDLVEC) is the PAC 1 domain. The PAS 2 domain maps to 574 to 644 (KQSWDKMLLE…RELKEAQQHT (71 aa)). Residues 650–691 (FRIRRKNSGYTWFESHGTLFNEQGKGRKCIILVGRKRPVFAL) form the PAC 2 domain. Residues 693–763 (RKDLELNGGI…RTIEKARKGK (71 aa)) enclose the PAS 3 domain. Positions 849 to 861 (MSKSGSSDSTGAM) are enriched in low complexity. Disordered stretches follow at residues 849–872 (MSKSGSSDSTGAMVSARSSAGPGQ), 918–952 (KKKRKRRKGGGNMVRDCANCHTRNTPEWRRGPSGN), 966–1047 (QTGR…TGST), and 1060–1167 (VNAL…GLSV). A GATA-type zinc finger spans residues 934–959 (CANCHTRNTPEWRRGPSGNRDLCNSC). Polar residues predominate over residues 968–977 (GRVSPRTSSR). Residues 986 to 995 (KKSNSPSHSS) show a composition bias toward low complexity. The span at 1004–1033 (DSPSTTTATKNSPSLRGSSTTAPGTITTDS) shows a compositional bias: polar residues. 2 stretches are compositionally biased toward low complexity: residues 1036 to 1047 (AVASSASGTGST) and 1104 to 1128 (QHQQQHQQQHQQQHQQQHQQLQQHQ).

Heterodimer of wc-1 and wc-2. FMN binds covalently to cysteine after exposure to blue light and is reversed in the dark.

Its subcellular location is the nucleus. Functionally, may function as a transcription factor involved in light regulation. Binds and affects blue light regulation of the al-3 gene. Wc-1 and wc-2 proteins interact via homologous PAS domains, bind to promoters of light regulated genes such as frq, and activate transcription. This chain is White collar 1 protein (wc-1), found in Neurospora crassa (strain ATCC 24698 / 74-OR23-1A / CBS 708.71 / DSM 1257 / FGSC 987).